The primary structure comprises 367 residues: Histidinol-phosphate aminotransferase 1 (367 aa).

Position 229 is an N6-(pyridoxal phosphate)lysine (lysine 229).

This sequence belongs to the class-II pyridoxal-phosphate-dependent aminotransferase family. Histidinol-phosphate aminotransferase subfamily. In terms of assembly, homodimer. Requires pyridoxal 5'-phosphate as cofactor.

It carries out the reaction L-histidinol phosphate + 2-oxoglutarate = 3-(imidazol-4-yl)-2-oxopropyl phosphate + L-glutamate. The protein operates within amino-acid biosynthesis; L-histidine biosynthesis; L-histidine from 5-phospho-alpha-D-ribose 1-diphosphate: step 7/9. In Idiomarina loihiensis (strain ATCC BAA-735 / DSM 15497 / L2-TR), this protein is Histidinol-phosphate aminotransferase 1.